The sequence spans 720 residues: Aminopeptidase RNPEPL1 (720 aa).

321 to 325 (VAMEN) provides a ligand contact to substrate. His348 lines the Zn(2+) pocket. Glu349 functions as the Proton acceptor in the catalytic mechanism. Zn(2+) is bound by residues His352 and Glu371. The segment at 671–708 (GLGPSAEPSTEPSTDLGGAEADTNPDSPALLLGDEAPS) is disordered.

Belongs to the peptidase M1 family. Requires Zn(2+) as cofactor.

It catalyses the reaction Release of N-terminal amino acids, preferentially methionine, from peptides and arylamides.. In terms of biological role, broad specificity aminopeptidase which preferentially hydrolyzes an N-terminal methionine, citrulline or glutamine. In Mus musculus (Mouse), this protein is Aminopeptidase RNPEPL1.